The sequence spans 359 residues: Outer membrane protein assembly factor BamC (359 aa).

The N-terminal stretch at 1 to 34 is a signal peptide; that stretch reads MASLFDKNSFQMTRLQKTAVAKVVGVSLIMLLAA. Residue C35 is the site of N-palmitoyl cysteine attachment. The S-diacylglycerol cysteine moiety is linked to residue C35.

It belongs to the BamC family. As to quaternary structure, part of the Bam complex, which is composed of the outer membrane protein BamA, and four lipoproteins BamB, BamC, BamD and BamE.

The protein localises to the cell outer membrane. Its function is as follows. Part of the outer membrane protein assembly complex, which is involved in assembly and insertion of beta-barrel proteins into the outer membrane. This Rahnella sp. (strain Y9602) protein is Outer membrane protein assembly factor BamC.